The following is a 137-amino-acid chain: Phosphoribosyl-AMP cyclohydrolase (137 aa).

Position 84 (Asp84) interacts with Mg(2+). Zn(2+) is bound at residue Cys85. Residues Asp86 and Asp88 each contribute to the Mg(2+) site. Zn(2+) is bound by residues Cys101 and Cys108.

It belongs to the PRA-CH family. Homodimer. It depends on Mg(2+) as a cofactor. The cofactor is Zn(2+).

The protein localises to the cytoplasm. It carries out the reaction 1-(5-phospho-beta-D-ribosyl)-5'-AMP + H2O = 1-(5-phospho-beta-D-ribosyl)-5-[(5-phospho-beta-D-ribosylamino)methylideneamino]imidazole-4-carboxamide. It functions in the pathway amino-acid biosynthesis; L-histidine biosynthesis; L-histidine from 5-phospho-alpha-D-ribose 1-diphosphate: step 3/9. In terms of biological role, catalyzes the hydrolysis of the adenine ring of phosphoribosyl-AMP. The polypeptide is Phosphoribosyl-AMP cyclohydrolase (Chlorobium phaeobacteroides (strain DSM 266 / SMG 266 / 2430)).